The primary structure comprises 453 residues: tRNA modification GTPase MnmE (453 aa).

3 residues coordinate (6S)-5-formyl-5,6,7,8-tetrahydrofolate: R22, E79, and K119. One can recognise a TrmE-type G domain in the interval 215–376; that stretch reads GMKVVIAGRP…LKQHLKSLMG (162 aa). Residue N225 coordinates K(+). GTP contacts are provided by residues 225–230, 244–250, 269–272, and 334–337; these read NAGKSS, TEIAGTT, DTAG, and NKAD. S229 is a Mg(2+) binding site. The K(+) site is built by T244, I246, and T249. T250 contacts Mg(2+). A (6S)-5-formyl-5,6,7,8-tetrahydrofolate-binding site is contributed by K453.

This sequence belongs to the TRAFAC class TrmE-Era-EngA-EngB-Septin-like GTPase superfamily. TrmE GTPase family. In terms of assembly, homodimer. Heterotetramer of two MnmE and two MnmG subunits. K(+) serves as cofactor.

It localises to the cytoplasm. In terms of biological role, exhibits a very high intrinsic GTPase hydrolysis rate. Involved in the addition of a carboxymethylaminomethyl (cmnm) group at the wobble position (U34) of certain tRNAs, forming tRNA-cmnm(5)s(2)U34. This is tRNA modification GTPase MnmE from Shewanella pealeana (strain ATCC 700345 / ANG-SQ1).